Here is a 399-residue protein sequence, read N- to C-terminus: Acetylornithine aminotransferase (399 aa).

Pyridoxal 5'-phosphate is bound by residues 102 to 103 and Phe-135; that span reads GA. Residue Arg-138 participates in N(2)-acetyl-L-ornithine binding. A pyridoxal 5'-phosphate-binding site is contributed by 220-223; that stretch reads DEIQ. Position 249 is an N6-(pyridoxal phosphate)lysine (Lys-249). Ser-277 is a N(2)-acetyl-L-ornithine binding site. Thr-278 is a binding site for pyridoxal 5'-phosphate.

This sequence belongs to the class-III pyridoxal-phosphate-dependent aminotransferase family. ArgD subfamily. As to quaternary structure, homodimer. Pyridoxal 5'-phosphate is required as a cofactor.

The protein localises to the cytoplasm. The enzyme catalyses N(2)-acetyl-L-ornithine + 2-oxoglutarate = N-acetyl-L-glutamate 5-semialdehyde + L-glutamate. The protein operates within amino-acid biosynthesis; L-arginine biosynthesis; N(2)-acetyl-L-ornithine from L-glutamate: step 4/4. The polypeptide is Acetylornithine aminotransferase (Oceanobacillus iheyensis (strain DSM 14371 / CIP 107618 / JCM 11309 / KCTC 3954 / HTE831)).